An 855-amino-acid chain; its full sequence is Inactive rhomboid protein 1 (855 aa).

Residues 1-36 (MSEARRDSTSSLQRKKPPWLKLDIPSAAPPAAEEPS) are disordered. Residues 1–411 (MSEARRDSTS…HRPFFTYWLT (411 aa)) are Cytoplasmic-facing. Positions 25–36 (PSAAPPAAEEPS) are enriched in low complexity. Ser76 and Ser176 each carry phosphoserine. Phosphothreonine occurs at positions 180 and 183. Phosphoserine is present on Ser390. Residues 412-432 (FVHSLVTVLAVCIYGIAPVGF) traverse the membrane as a helical segment. Residues 433 to 655 (SQHETVDSVL…NPEVPDQFYR (223 aa)) lie on the Lumenal side of the membrane. Residue Asn583 is glycosylated (N-linked (GlcNAc...) asparagine). Residues 656-676 (LWLSLFLHAGILHCLVSICFQ) form a helical membrane-spanning segment. Residues 677–691 (MTVLRDLEKLAGWHR) are Cytoplasmic-facing. Residues 692 to 712 (IAIIYLLSGVTGNLASAIFLP) form a helical membrane-spanning segment. At 713–714 (YR) the chain is on the lumenal side. Residues 715-735 (AEVGPAGSQFGILACLFVELF) traverse the membrane as a helical segment. At 736 to 746 (QSWQILARPWR) the chain is on the cytoplasmic side. A helical membrane pass occupies residues 747–767 (AFFKLLAVVLFLFTFGLLPWI). Topologically, residues 768–772 (DNFAH) are lumenal. The helical transmembrane segment at 773–793 (ISGFISGLFLSFAFLPYISFG) threads the bilayer. Topologically, residues 794-803 (KFDLYRKRCQ) are cytoplasmic. Residues 804 to 824 (IIVFQVVFLGLLAGLVVLFYF) form a helical membrane-spanning segment. Over 825 to 855 (YPVRCEWCEFLTCIPFTDKFCEKYELDAQLH) the chain is Lumenal.

It belongs to the peptidase S54 family. As to quaternary structure, homodimer, or homooligomer. Interacts with TGFA and HBEGF. Interacts with EGF; may retain EGF in the endoplasmic reticulum and regulates its degradation through the endoplasmic reticulum-associated degradation (ERAD). Interacts (via cytoplasmic N-terminus) with FRMD8/iTAP; this interaction leads to mutual protein stabilization. Interacts with ADAM17/TACE.

The protein resides in the endoplasmic reticulum membrane. It is found in the golgi apparatus membrane. Its function is as follows. Regulates ADAM17 protease, a sheddase of the epidermal growth factor (EGF) receptor ligands and TNF, thereby plays a role in sleep, cell survival, proliferation, migration and inflammation. Does not exhibit any protease activity on its own. This chain is Inactive rhomboid protein 1 (RHBDF1), found in Plecturocebus moloch (Dusky titi monkey).